The primary structure comprises 353 residues: MGCVQSTGVDDEAKARNDEIENQLKRDRVMAKNEIKMLLLGAGESGKSTVLKQMKLIHHGGYSDQEKDSYKEIIFSNTVQSMRAILDALPALDLALQPANDARRATILAVPGQIEAEVLPRDIADAIRQLWADPGLKEAVRRSREFQLNDSAVYYFNSIDRMSAPGYLPTDQDILRSRVKTTGITETTFKVGELTYKLFDVGGQRSERKKWIHCFENVTALVFLVSLSEYDQMLYEDESVNRMQEALTLFDSICNSRWFVKTSIILFLNKIDLFAEKLPARRSTYFPDFTGGDNYDAACDYLLHRFVSLNQSAATKQIYAHYTCATDTQQIKFVLSAIQDILLQLHLRECGLL.

A lipid anchor (N-myristoyl glycine) is attached at Gly-2. Cys-3 carries the S-palmitoyl cysteine lipid modification. In terms of domain architecture, G-alpha spans 33–353 (NEIKMLLLGA…QLHLRECGLL (321 aa)). The G1 motif stretch occupies residues 36–49 (KMLLLGAGESGKST). GTP-binding residues include Glu-44, Ser-45, Gly-46, Lys-47, Ser-48, Thr-49, Asp-150, Leu-175, Thr-181, Gly-203, Asn-269, Lys-270, Asp-272, and Ala-325. Ser-48 contacts Mg(2+). The G2 motif stretch occupies residues 173-181 (DILRSRVKT). Position 181 (Thr-181) interacts with Mg(2+). The G3 motif stretch occupies residues 196 to 205 (YKLFDVGGQR). Residues 265 to 272 (ILFLNKID) form a G4 motif region. The tract at residues 323 to 328 (TCATDT) is G5 motif.

It belongs to the G-alpha family. G(q) subfamily. As to quaternary structure, g proteins are composed of 3 units; alpha, beta and gamma. The alpha chain contains the guanine nucleotide binding site. It depends on Mg(2+) as a cofactor.

Guanine nucleotide-binding proteins (G proteins) are involved as modulators or transducers in various transmembrane signaling systems. The sequence is that of Guanine nucleotide-binding protein subunit alpha (CGP1) from Coprinellus congregatus (Inky cap fungus).